The following is an 889-amino-acid chain: TATA box-binding protein-associated factor RNA polymerase I subunit B (889 aa).

The segment at 1 to 33 (MAPETNEKCKACGGFNFSMIDGFKYCDRCGTLL) adopts an RRN7-type zinc-finger fold. Zn(2+) contacts are provided by Cys9, Cys12, Cys26, and Cys29. The segment at 35-101 (NFEELEAEEG…DFFSRQALKN (67 aa)) is B-reader. The segment at 102 to 113 (DELAFPHESTPD) is B-linker. The N-terminal cyclin fold stretch occupies residues 114-351 (YLYRLGLRLA…SAKEQETKEA (238 aa)). Residues 229–253 (NLDLDSEEDEEEEENPNLNKSMENL) are disordered. Acidic residues predominate over residues 230–243 (LDLDSEEDEEEEEN). Residues 352–510 (MTKVDYAEPY…LLVFRLTFDI (159 aa)) are C-terminal cyclin fold.

The protein belongs to the RRN7/TAF1B family.

The protein localises to the nucleus. The protein resides in the nucleolus. Component of RNA polymerase I core factor complex that acts as a GTF2B/TFIIB-like factor and plays a key role in multiple steps during transcription initiation such as pre-initiation complex (PIC) assembly and postpolymerase recruitment events in polymerase I (Pol I) transcription. Binds rDNA promoters and plays a role in Pol I recruitment. This Caenorhabditis briggsae protein is TATA box-binding protein-associated factor RNA polymerase I subunit B.